Reading from the N-terminus, the 364-residue chain is Appendage-associated protein (364 aa).

2 coiled-coil regions span residues 142–196 and 288–313; these read IIHE…AECR and RIAQAELAAAADALKRAADKLQALGK.

The protein localises to the secreted. Associates with actin filament appendages that are formed in the inclusion appendages of the parasitophorous vacuole during infection of the host erythrocyte. The chain is Appendage-associated protein from Anaplasma marginale (strain Illinois).